The following is a 309-amino-acid chain: MSANLEYPNGTTADAENGMWLHHILFYNKANRDDICGEKKPGQRFFGSGNDRTPLDLTDGGKNKLGYHIGHNDQFFISVELMNMHFSSQVVVLTAHWKFVEEPYSKYELGTPYWFDVASCGRSDVPATNNAIFDFISPPVRLDFHGRMAYLSNHVHDGAFLHEVKKNGKTICSVNPQYSSADGADGIVHLSHVPPCSNAGPVAPGDEVSLTASYDTTKYKPMINEDGTLEPVMGVTLAYIVKGTAPVENDSGGRLYFAVPLAAIAFIALIISGGYVIYSAKQQKAWPKWLSRRQKYQSVGTEVESFITR.

Residues asparagine 9 and asparagine 249 are each glycosylated (N-linked (GlcNAc...) asparagine). A helical transmembrane segment spans residues 257-277 (FAVPLAAIAFIALIISGGYVI).

The protein belongs to the clz3 oxygenase family.

It is found in the membrane. Its pathway is secondary metabolite biosynthesis. Probable copper-dependent oxygenase; part of the gene cluster that mediates the biosynthesis of squalestatin S1 (SQS1, also known as zaragozic acid A), a heavily oxidized fungal polyketide that offers potent cholesterol lowering activity by targeting squalene synthase (SS). SQS1 is composed of a 2,8-dioxobicyclic[3.2.1]octane-3,4,5-tricarboxyclic acid core that is connected to two lipophilic polyketide arms. These initial steps feature the priming of an unusual benzoic acid starter unit onto the highly reducing polyketide synthase clz14, followed by oxaloacetate extension and product release to generate a tricarboxylic acid containing product. The phenylalanine ammonia lyase (PAL) clz10 and the acyl-CoA ligase clz12 are involved in transforming phenylalanine into benzoyl-CoA. The citrate synthase-like protein clz17 is involved in connecting the C-alpha-carbons of the hexaketide chain and oxaloacetate to afford the tricarboxylic acid unit. The potential hydrolytic enzymes, clz11 and clz13, are in close proximity to pks2 and may participate in product release. On the other side, the tetraketide arm is synthesized by a the squalestatin tetraketide synthase clz2 and enzymatically esterified to the core in the last biosynthetic step, by the acetyltransferase clz6. The biosynthesis of the tetraketide must involve 3 rounds of chain extension. After the first and second rounds methyl-transfer occurs, and in all rounds of extension the ketoreductase and dehydratase are active. The enoyl reductase and C-MeT of clz2 are not active in the final round of extension. The acetyltransferase clz6 appears to have a broad substrate selectivity for its acyl CoA substrate, allowing the in vitro synthesis of novel squalestatins. The biosynthesis of SQS1 requires several oxidative steps likely performed by oxidoreductases clz3, clz15 and clz16. Finally, in support of the identification of the cluster as being responsible for SQS1 production, the cluster contains a gene encoding a putative squalene synthase (SS) clz20, suggesting a likely mechanism for self-resistance. In Cochliobolus lunatus (Filamentous fungus), this protein is Probable copper-dependent oxygenase clz3.